A 484-amino-acid chain; its full sequence is Cobyric acid synthase (484 aa).

Residues 246–437 (ALRVVVPALP…VHGLFDTPAA (192 aa)) enclose the GATase cobBQ-type domain. C327 (nucleophile) is an active-site residue. H429 is an active-site residue.

Belongs to the CobB/CobQ family. CobQ subfamily.

It participates in cofactor biosynthesis; adenosylcobalamin biosynthesis. In terms of biological role, catalyzes amidations at positions B, D, E, and G on adenosylcobyrinic A,C-diamide. NH(2) groups are provided by glutamine, and one molecule of ATP is hydrogenolyzed for each amidation. The polypeptide is Cobyric acid synthase (Paraburkholderia phymatum (strain DSM 17167 / CIP 108236 / LMG 21445 / STM815) (Burkholderia phymatum)).